Reading from the N-terminus, the 149-residue chain is Calmodulin (149 aa).

Alanine 2 carries the post-translational modification N-acetylalanine. 4 EF-hand domains span residues 8 to 43 (EQIA…LGQN), 44 to 79 (PTEA…KMKD), 81 to 116 (DSEE…LGEK), and 117 to 149 (LTDE…MTSK). Ca(2+) is bound by residues aspartate 21, aspartate 23, aspartate 25, threonine 27, glutamate 32, aspartate 57, aspartate 59, aspartate 61, threonine 63, glutamate 68, aspartate 94, aspartate 96, aspartate 98, and glutamate 105. The residue at position 116 (lysine 116) is an N6,N6,N6-trimethyllysine. The Ca(2+) site is built by aspartate 130, aspartate 132, aspartate 134, glutamine 136, and glutamate 141.

Belongs to the calmodulin family.

Its function is as follows. Calmodulin mediates the control of a large number of enzymes, ion channels and other proteins by Ca(2+). Among the enzymes to be stimulated by the calmodulin-Ca(2+) complex are a number of protein kinases and phosphatases. In Renilla reniformis (Sea pansy), this protein is Calmodulin.